A 372-amino-acid chain; its full sequence is Pyruvylated Gal-beta-1,3-epitope synthesis protein 5 (372 aa).

At 1 to 12 (MGLPLRIFAGNG) the chain is on the cytoplasmic side. The chain crosses the membrane as a helical; Signal-anchor for type II membrane protein span at residues 13 to 35 (IGGWCLRLFLFGSLILLLRPLIF). Residues 36 to 372 (YSNTTMKKLK…LRIIEQWKQL (337 aa)) are Lumenal-facing. N38 and N128 each carry an N-linked (GlcNAc...) asparagine glycan.

The protein resides in the golgi apparatus membrane. Functionally, involved in cell wall biogenesis. Has a role in the addition of Gal-beta1,3 moeities to galactomannans and their subsequent pyruvylation. Has a role in meiosis. This is Pyruvylated Gal-beta-1,3-epitope synthesis protein 5 (pvg5) from Schizosaccharomyces pombe (strain 972 / ATCC 24843) (Fission yeast).